The primary structure comprises 118 residues: 5-hydroxyisourate hydrolase (118 aa).

The substrate site is built by His-11, Arg-51, and Tyr-115.

The protein belongs to the transthyretin family. 5-hydroxyisourate hydrolase subfamily. As to quaternary structure, homotetramer.

It localises to the peroxisome. The enzyme catalyses 5-hydroxyisourate + H2O = 5-hydroxy-2-oxo-4-ureido-2,5-dihydro-1H-imidazole-5-carboxylate + H(+). It functions in the pathway purine metabolism; urate degradation; (S)-allantoin from urate: step 2/3. Functionally, catalyzes the hydrolysis of 5-hydroxyisourate (HIU) to 2-oxo-4-hydroxy-4-carboxy-5-ureidoimidazoline (OHCU). The chain is 5-hydroxyisourate hydrolase (Urah) from Mus musculus (Mouse).